The primary structure comprises 221 residues: Kinetochore protein Spc25 (221 aa).

Positions 63–114 form a coiled coil; it reads VIQRREEMEKRVSFMEELAQEVEATKQRNLVMREQIKQQKMLVRQRKNEIME.

The protein belongs to the SPC25 family. In terms of assembly, component of the Ndc80 complex, which is composed of Ndc80, Nuf2 and Spc25.

The protein resides in the nucleus. Its subcellular location is the chromosome. The protein localises to the centromere. It localises to the kinetochore. In terms of biological role, acts as a component of the essential kinetochore-associated Ndc80 complex, which is required for chromosome segregation and spindle checkpoint activity during meiosis and mitosis. Required for kinetochore integrity and the organization of stable microtubule binding sites in the outer plate of the kinetochore. Participates in SAC signaling that responds specifically to disruptions in spindle microtubule dynamics. The NDC80 complex synergistically enhances the affinity of the SKA1 complex for microtubules and may allow the NDC80 complex to track depolymerizing microtubules. The protein is Kinetochore protein Spc25 of Drosophila eugracilis (Fruit fly).